The chain runs to 138 residues: Small ribosomal subunit protein uS11c (138 aa).

The interval 1 to 24 is disordered; the sequence is MAKSPPRSGSRRPGRIGSRKSGRR. Residues 9-24 are compositionally biased toward basic residues; the sequence is GSRRPGRIGSRKSGRR.

This sequence belongs to the universal ribosomal protein uS11 family. Part of the 30S ribosomal subunit.

The protein localises to the plastid. It is found in the chloroplast. The protein is Small ribosomal subunit protein uS11c of Citrus sinensis (Sweet orange).